The chain runs to 243 residues: Ribonuclease PH (243 aa).

Residues R91 and 129 to 131 (GTR) each bind phosphate.

The protein belongs to the RNase PH family. As to quaternary structure, homohexameric ring arranged as a trimer of dimers.

The catalysed reaction is tRNA(n+1) + phosphate = tRNA(n) + a ribonucleoside 5'-diphosphate. Its function is as follows. Phosphorolytic 3'-5' exoribonuclease that plays an important role in tRNA 3'-end maturation. Removes nucleotide residues following the 3'-CCA terminus of tRNAs; can also add nucleotides to the ends of RNA molecules by using nucleoside diphosphates as substrates, but this may not be physiologically important. Probably plays a role in initiation of 16S rRNA degradation (leading to ribosome degradation) during starvation. This chain is Ribonuclease PH, found in Burkholderia mallei (strain NCTC 10247).